The sequence spans 303 residues: Vesicle-trafficking protein SEC22c (303 aa).

Residues Met1–Pro183 lie on the Cytoplasmic side of the membrane. The region spanning Cys8–Ile119 is the Longin domain. A helical transmembrane segment spans residues Val184–Ile204. Residues Arg205–Asn223 lie on the Lumenal side of the membrane. The helical transmembrane segment at Ile224 to Tyr244 threads the bilayer. The Cytoplasmic portion of the chain corresponds to Ser245–Arg248. Residues Thr249–Leu269 traverse the membrane as a helical segment. A topological domain (lumenal) is located at residue Arg270. Residues Asn271–Thr291 form a helical membrane-spanning segment. Topologically, residues Arg292–Val303 are cytoplasmic.

Belongs to the synaptobrevin family.

The protein localises to the endoplasmic reticulum membrane. Functionally, may be involved in vesicle transport between the ER and the Golgi complex. The polypeptide is Vesicle-trafficking protein SEC22c (SEC22C) (Bos taurus (Bovine)).